Here is a 432-residue protein sequence, read N- to C-terminus: Phosphomethylpyrimidine synthase (432 aa).

Residues Asn66, Met95, Tyr124, His163, 185 to 187 (SRG), 226 to 229 (DGLR), and Glu265 each bind substrate. A Zn(2+)-binding site is contributed by His269. A substrate-binding site is contributed by Tyr292. His333 contacts Zn(2+). Positions 409, 412, and 416 each coordinate [4Fe-4S] cluster.

Belongs to the ThiC family. The cofactor is [4Fe-4S] cluster.

It catalyses the reaction 5-amino-1-(5-phospho-beta-D-ribosyl)imidazole + S-adenosyl-L-methionine = 4-amino-2-methyl-5-(phosphooxymethyl)pyrimidine + CO + 5'-deoxyadenosine + formate + L-methionine + 3 H(+). The protein operates within cofactor biosynthesis; thiamine diphosphate biosynthesis. Its function is as follows. Catalyzes the synthesis of the hydroxymethylpyrimidine phosphate (HMP-P) moiety of thiamine from aminoimidazole ribotide (AIR) in a radical S-adenosyl-L-methionine (SAM)-dependent reaction. In Thermoanaerobacter pseudethanolicus (strain ATCC 33223 / 39E) (Clostridium thermohydrosulfuricum), this protein is Phosphomethylpyrimidine synthase.